The chain runs to 202 residues: uncharacterized protein (202 aa).

A disordered region spans residues 118–202 (SSVSPVSSKK…KVSGTKKVKA (85 aa)). Residue serine 121 is modified to Phosphoserine. Basic residues-rich tracts occupy residues 142–163 (EKSKKKKEKKEKKDKLKKKSKR) and 186–202 (SSKSGLKKVSGTKKVKA).

Its subcellular location is the nucleus. It localises to the nucleolus. This is an uncharacterized protein from Schizosaccharomyces pombe (strain 972 / ATCC 24843) (Fission yeast).